A 306-amino-acid polypeptide reads, in one-letter code: Beta-lactamase (306 aa).

An N-terminal signal peptide occupies residues 1–34 (MNVKRKATLKFGICIGLLCVSFTGFNSLFGSTHA). Catalysis depends on Ser89, which acts as the Acyl-ester intermediate. Substrate is bound at residue 251–253 (KSG).

This sequence belongs to the class-A beta-lactamase family.

It carries out the reaction a beta-lactam + H2O = a substituted beta-amino acid. Functionally, this protein is a beta-lactamase with a substrate specificity for penicillins. The chain is Beta-lactamase (penP) from Bacillus amyloliquefaciens (Bacillus velezensis).